A 1012-amino-acid polypeptide reads, in one-letter code: Autotransporter adhesin BpaC (1012 aa).

An N-terminal signal peptide occupies residues 1–71 (MNRIFKSIWC…PFAEEAMAAN (71 aa)). The tract at residues 72–921 (NAGVCLTYNG…VGQLNSAVSG (850 aa)) is surface exposed passenger domain. 2 disordered regions span residues 420–746 (GLQG…AGAT) and 785–809 (ENSTANGANSTASGNGSSAFGESAA). The span at 427 to 442 (ANTGTASGDNSTASGD) shows a compositional bias: polar residues. Residues 443–504 (NATASGTNST…ANGTNSTASG (62 aa)) show a composition bias toward low complexity. Residues 505–519 (DNSTASGTNASATGE) show a composition bias toward polar residues. The span at 520–588 (NSTATGTDST…ANGTNSTASG (69 aa)) shows a compositional bias: low complexity. The segment covering 589–603 (DNSTASGTNASATGE) has biased composition (polar residues). The segment covering 604 to 630 (NSTATGTDSTASGSNSTANGTNSTASG) has biased composition (low complexity). Over residues 631–645 (DNSTASGTNASATGE) the composition is skewed to polar residues. 2 stretches are compositionally biased toward low complexity: residues 646–700 (NSTA…TASG) and 708–746 (TNASATGENSTATGTASTASGSNSTANGANSTASGAGAT). Residues 922 to 959 (IRNQMDGMQGQIDTLARDAYSGIAAATALTMIPDVDPG) are outer membrane translocation of the passenger domain. The translocator domain stretch occupies residues 960–1012 (KTLAVGIGTANFKGYQASALGATARITQNLKVKTGVSYSGSNYVWGAGMSYQW).

The protein belongs to the autotransporter-2 (AT-2) (TC 1.B.40) family. Homotrimer.

Its subcellular location is the cell surface. The protein localises to the cell outer membrane. In terms of biological role, involved in virulence. Mediates adherence to human respiratory epithelial cells. The protein is Autotransporter adhesin BpaC of Burkholderia mallei (strain ATCC 23344).